The sequence spans 66 residues: Defensin-like peptide 2/4 (66 aa).

Residues 1-22 (MRLAYLLLLLVAVLFQAGGGSA) form the signal peptide. A propeptide spanning residues 23–24 (KP) is cleaved from the precursor. Met26 is subject to D-methionine; in form DLP-2. 3 cysteine pairs are disulfide-bonded: Cys33-Cys63, Cys40-Cys56, and Cys48-Cys64.

Post-translationally, stereoinversion of L-Met-26 (in DLP-4) to D-Met-26 (in DLP-2). In terms of tissue distribution, produced by the crural gland and detected in venom from the spur located on each male hind leg. Is also widely expressed in both male and female tissues, including brain, intestine, kidney, lung, spleen and testis.

It localises to the secreted. Its function is as follows. Does not show antimicrobial, myotoxic, hemolytic and cell-promoting activities. This is Defensin-like peptide 2/4 from Ornithorhynchus anatinus (Duckbill platypus).